The chain runs to 215 residues: Large ribosomal subunit protein uL3 (215 aa).

Residues 131 to 144 (SSSRASHGNSRSHN) are compositionally biased toward low complexity. The segment at 131 to 150 (SSSRASHGNSRSHNVPGSIG) is disordered. Gln-153 carries the N5-methylglutamine modification.

Belongs to the universal ribosomal protein uL3 family. In terms of assembly, part of the 50S ribosomal subunit. Forms a cluster with proteins L14 and L19. Methylated by PrmB.

Functionally, one of the primary rRNA binding proteins, it binds directly near the 3'-end of the 23S rRNA, where it nucleates assembly of the 50S subunit. This is Large ribosomal subunit protein uL3 from Nitrosomonas europaea (strain ATCC 19718 / CIP 103999 / KCTC 2705 / NBRC 14298).